We begin with the raw amino-acid sequence, 394 residues long: Succinate--CoA ligase [ADP-forming] subunit beta 1 (394 aa).

Residues 9–237 enclose the ATP-grasp domain; sequence RDLFAKHDVP…KAAANPLEAA (229 aa). ATP-binding positions include K45, 52–54, E92, P95, and E100; that span reads GRG. Positions 192 and 206 each coordinate Mg(2+). Substrate contacts are provided by residues N257 and 319–321; that span reads GIT.

Belongs to the succinate/malate CoA ligase beta subunit family. In terms of assembly, heterotetramer of two alpha and two beta subunits. Mg(2+) is required as a cofactor.

It catalyses the reaction succinate + ATP + CoA = succinyl-CoA + ADP + phosphate. It carries out the reaction GTP + succinate + CoA = succinyl-CoA + GDP + phosphate. The protein operates within carbohydrate metabolism; tricarboxylic acid cycle; succinate from succinyl-CoA (ligase route): step 1/1. Succinyl-CoA synthetase functions in the citric acid cycle (TCA), coupling the hydrolysis of succinyl-CoA to the synthesis of either ATP or GTP and thus represents the only step of substrate-level phosphorylation in the TCA. The beta subunit provides nucleotide specificity of the enzyme and binds the substrate succinate, while the binding sites for coenzyme A and phosphate are found in the alpha subunit. The sequence is that of Succinate--CoA ligase [ADP-forming] subunit beta 1 from Streptomyces coelicolor (strain ATCC BAA-471 / A3(2) / M145).